We begin with the raw amino-acid sequence, 364 residues long: Aminomethyltransferase (364 aa).

The protein belongs to the GcvT family. As to quaternary structure, the glycine cleavage system is composed of four proteins: P, T, L and H.

The catalysed reaction is N(6)-[(R)-S(8)-aminomethyldihydrolipoyl]-L-lysyl-[protein] + (6S)-5,6,7,8-tetrahydrofolate = N(6)-[(R)-dihydrolipoyl]-L-lysyl-[protein] + (6R)-5,10-methylene-5,6,7,8-tetrahydrofolate + NH4(+). Its function is as follows. The glycine cleavage system catalyzes the degradation of glycine. This Shewanella sp. (strain MR-4) protein is Aminomethyltransferase.